The following is an 857-amino-acid chain: DNA mismatch repair protein MutS (857 aa).

Residue 608-615 (GPNMSGKS) participates in ATP binding.

The protein belongs to the DNA mismatch repair MutS family.

This protein is involved in the repair of mismatches in DNA. It is possible that it carries out the mismatch recognition step. This protein has a weak ATPase activity. In Lactobacillus johnsonii (strain CNCM I-12250 / La1 / NCC 533), this protein is DNA mismatch repair protein MutS.